Reading from the N-terminus, the 403-residue chain is Acetylornithine aminotransferase (403 aa).

Residues 101–102 (GA) and Phe134 contribute to the pyridoxal 5'-phosphate site. Arg137 serves as a coordination point for N(2)-acetyl-L-ornithine. 219–222 (DEVQ) lines the pyridoxal 5'-phosphate pocket. Position 248 is an N6-(pyridoxal phosphate)lysine (Lys248). Thr276 lines the N(2)-acetyl-L-ornithine pocket. Thr277 provides a ligand contact to pyridoxal 5'-phosphate.

The protein belongs to the class-III pyridoxal-phosphate-dependent aminotransferase family. ArgD subfamily. Homodimer. Pyridoxal 5'-phosphate serves as cofactor.

It localises to the cytoplasm. It carries out the reaction N(2)-acetyl-L-ornithine + 2-oxoglutarate = N-acetyl-L-glutamate 5-semialdehyde + L-glutamate. It participates in amino-acid biosynthesis; L-arginine biosynthesis; N(2)-acetyl-L-ornithine from L-glutamate: step 4/4. The polypeptide is Acetylornithine aminotransferase (Brucella melitensis biotype 1 (strain ATCC 23456 / CCUG 17765 / NCTC 10094 / 16M)).